A 273-amino-acid chain; its full sequence is WIMGHMVNSIAQIDEFVNLGANSIETDVSFDKQANPEYTYHGTPCDCGRDCLHWENFNDFLKGLRKATTPGDSKYHEKLILVVFDLKTGSLYDNQAYDAGTKLAKNLLEHYWNNGNNGGRAYIVLSIPNLNHYKLIAGFKDTLKSEGHEDLLEKVGHDFSGNDDIPDVENAYKKAGVTGHVWQSDGITNCLPRTLKRVRLAIANRDSGSGIINKVYYWTVDKRSTTRDSLDAGVDGIMTNYPDVIADVLSESAYKNKYRIATYEDNPWDTFKA.

His5 is an active-site residue. 2 residues coordinate Mg(2+): Glu25 and Asp27. Catalysis depends on His41, which acts as the Nucleophile. Cystine bridges form between Cys45/Cys51 and Cys47/Cys190. Mg(2+) is bound at residue Asp85.

It belongs to the arthropod phospholipase D family. Class II subfamily. It depends on Mg(2+) as a cofactor. Expressed by the venom gland.

It localises to the secreted. The catalysed reaction is an N-(acyl)-sphingosylphosphocholine = an N-(acyl)-sphingosyl-1,3-cyclic phosphate + choline. It catalyses the reaction an N-(acyl)-sphingosylphosphoethanolamine = an N-(acyl)-sphingosyl-1,3-cyclic phosphate + ethanolamine. The enzyme catalyses a 1-acyl-sn-glycero-3-phosphocholine = a 1-acyl-sn-glycero-2,3-cyclic phosphate + choline. It carries out the reaction a 1-acyl-sn-glycero-3-phosphoethanolamine = a 1-acyl-sn-glycero-2,3-cyclic phosphate + ethanolamine. In terms of biological role, dermonecrotic toxins cleave the phosphodiester linkage between the phosphate and headgroup of certain phospholipids (sphingolipid and lysolipid substrates), forming an alcohol (often choline) and a cyclic phosphate. This toxin acts on sphingomyelin (SM). It may also act on ceramide phosphoethanolamine (CPE), lysophosphatidylcholine (LPC) and lysophosphatidylethanolamine (LPE), but not on lysophosphatidylserine (LPS), and lysophosphatidylglycerol (LPG). It acts by transphosphatidylation, releasing exclusively cyclic phosphate products as second products. Induces dermonecrosis, hemolysis, increased vascular permeability, edema, inflammatory response, and platelet aggregation. The polypeptide is Dermonecrotic toxin LruSicTox-alphaIC1c (Loxosceles rufescens (Mediterranean recluse spider)).